Here is a 153-residue protein sequence, read N- to C-terminus: Ribosome maturation factor RimP (153 aa).

The protein belongs to the RimP family.

It localises to the cytoplasm. Functionally, required for maturation of 30S ribosomal subunits. The protein is Ribosome maturation factor RimP of Clostridium botulinum (strain Langeland / NCTC 10281 / Type F).